A 456-amino-acid polypeptide reads, in one-letter code: Histidine--tRNA ligase (456 aa).

The segment covering 1–11 (MTQNENPSAQS) has biased composition (polar residues). The segment at 1 to 22 (MTQNENPSAQSGAKPEDKARPA) is disordered.

The protein belongs to the class-II aminoacyl-tRNA synthetase family. Homodimer.

The protein resides in the cytoplasm. The enzyme catalyses tRNA(His) + L-histidine + ATP = L-histidyl-tRNA(His) + AMP + diphosphate + H(+). This is Histidine--tRNA ligase from Cupriavidus pinatubonensis (strain JMP 134 / LMG 1197) (Cupriavidus necator (strain JMP 134)).